The sequence spans 607 residues: UvrABC system protein C (607 aa).

Residues 15–93 enclose the GIY-YIG domain; sequence SEPGVYCMLD…IKKYQPRYNI (79 aa). Residues 202–237 form the UVR domain; sequence HEVIADLIKKMEAASQQLNFELAAKVRDQIMLLRKM.

The protein belongs to the UvrC family. In terms of assembly, interacts with UvrB in an incision complex.

It is found in the cytoplasm. In terms of biological role, the UvrABC repair system catalyzes the recognition and processing of DNA lesions. UvrC both incises the 5' and 3' sides of the lesion. The N-terminal half is responsible for the 3' incision and the C-terminal half is responsible for the 5' incision. The polypeptide is UvrABC system protein C (Pseudoalteromonas translucida (strain TAC 125)).